A 335-amino-acid chain; its full sequence is MLP-like protein 28 (335 aa).

Belongs to the MLP family.

Its function is as follows. Can bind steroids (in vitro), and may also bind other types of hydrophobic ligands. This Arabidopsis thaliana (Mouse-ear cress) protein is MLP-like protein 28 (MLP28).